Here is a 494-residue protein sequence, read N- to C-terminus: Probable malate:quinone oxidoreductase (494 aa).

It belongs to the MQO family. Requires FAD as cofactor.

It carries out the reaction (S)-malate + a quinone = a quinol + oxaloacetate. Its pathway is carbohydrate metabolism; tricarboxylic acid cycle; oxaloacetate from (S)-malate (quinone route): step 1/1. This chain is Probable malate:quinone oxidoreductase, found in Micrococcus luteus (strain ATCC 4698 / DSM 20030 / JCM 1464 / CCM 169 / CCUG 5858 / IAM 1056 / NBRC 3333 / NCIMB 9278 / NCTC 2665 / VKM Ac-2230) (Micrococcus lysodeikticus).